Here is a 977-residue protein sequence, read N- to C-terminus: Disks large-associated protein 3 (977 aa).

Residues 1 to 10 (MRGYHGDRGS) show a composition bias toward basic and acidic residues. Disordered regions lie at residues 1-30 (MRGYHGDRGSHPRPARFADQQHMDVGPAAR), 52-90 (AGLGHLSPEGPLSLSEGPSSVGPEGGPGGVGAGGSSSTF), 137-167 (FHTLPYQRGPAGPGPGPGSGAAPEARSESPS), 181-289 (AKSH…CLDA), 398-417 (AMGDEESGDSDGSPKTSPKA), and 529-582 (PGSS…SADG). Over residues 53 to 73 (GLGHLSPEGPLSLSEGPSSVG) the composition is skewed to low complexity. A Phosphoserine modification is found at Ser58. A compositionally biased stretch (gly residues) spans 74-85 (PEGGPGGVGAGG). Residues 189 to 201 (PGKRDYNGPKAEG) show a composition bias toward basic and acidic residues. Low complexity predominate over residues 202-212 (RSSSGGDSYSG). Residues 221 to 245 (SHHHHHHHHHHHHQSRHGKRSKSKD) are compositionally biased toward basic residues. Low complexity predominate over residues 258–271 (GWWSSDDNLDSDSG). 4 positions are modified to phosphoserine: Ser404, Ser407, Ser410, and Ser414. Residues 538-547 (APPPIPPGSQ) are compositionally biased toward pro residues. Residues Ser641 and Ser643 each carry the phosphoserine modification. 2 disordered regions span residues 739 to 788 (EGYP…RTSP) and 906 to 939 (EEKKVPPPIPKKPSRGRGVPVKERSLDSVDRQRQ). A compositionally biased stretch (pro residues) spans 754–763 (PGPPPVPAPG). Basic and acidic residues-rich tracts occupy residues 767-777 (GRRDSWMERGS) and 925-939 (PVKERSLDSVDRQRQ). Phosphoserine is present on residues Ser930, Ser933, and Ser965.

The protein belongs to the SAPAP family. As to quaternary structure, interacts with DLG1 and DLG4/PSD-95. As to expression, expressed in most brain regions.

It localises to the cell membrane. It is found in the postsynaptic density. The protein localises to the synapse. Its function is as follows. May play a role in the molecular organization of synapses and neuronal cell signaling. Could be an adapter protein linking ion channel to the subsynaptic cytoskeleton. May induce enrichment of PSD-95/SAP90 at the plasma membrane. This Rattus norvegicus (Rat) protein is Disks large-associated protein 3 (Dlgap3).